Consider the following 397-residue polypeptide: tRNA(Ile)-lysidine synthase (397 aa).

44–49 (SGGADS) serves as a coordination point for ATP.

Belongs to the tRNA(Ile)-lysidine synthase family.

The protein resides in the cytoplasm. The enzyme catalyses cytidine(34) in tRNA(Ile2) + L-lysine + ATP = lysidine(34) in tRNA(Ile2) + AMP + diphosphate + H(+). Functionally, ligates lysine onto the cytidine present at position 34 of the AUA codon-specific tRNA(Ile) that contains the anticodon CAU, in an ATP-dependent manner. Cytidine is converted to lysidine, thus changing the amino acid specificity of the tRNA from methionine to isoleucine. This chain is tRNA(Ile)-lysidine synthase, found in Rhodopirellula baltica (strain DSM 10527 / NCIMB 13988 / SH1).